The primary structure comprises 156 residues: Protein-export protein SecB (156 aa).

This sequence belongs to the SecB family. As to quaternary structure, homotetramer, a dimer of dimers. One homotetramer interacts with 1 SecA dimer.

Its subcellular location is the cytoplasm. Its function is as follows. One of the proteins required for the normal export of preproteins out of the cell cytoplasm. It is a molecular chaperone that binds to a subset of precursor proteins, maintaining them in a translocation-competent state. It also specifically binds to its receptor SecA. The protein is Protein-export protein SecB of Aeromonas hydrophila subsp. hydrophila (strain ATCC 7966 / DSM 30187 / BCRC 13018 / CCUG 14551 / JCM 1027 / KCTC 2358 / NCIMB 9240 / NCTC 8049).